A 752-amino-acid chain; its full sequence is MEKNTNTNHTSDDNNDKNHTNEEQEKIILNPNFEDGLNNWTGRACKIVLHESMDSGKIVPLSGKVFAAATQRKDTWNGIQQEISGRFRRKRVYEVTAVVRIFGNNVTSATVQATLWVLNANKREQYIVIANVQATDKNWVELKGKFVIHGSPSRVILYLEGPPPRADILLNSLVVQHAKRNRPSPPPFYENPGFGVNIVENSEVLDGGTKPWFTLGNCKLSVGQGAPRTLPPMARDTLGPHKPLGGNYIVVTNRTQTWMGPAQMITDKIKLFLTYQISAWVKLGVGVSGSSMSPQNVNIALSVDNQWVNGGQVEVTVGDTWHEIAGSFRLEKQPQNVMVYVQGPGAGIDLMIAALQIFPVDRRERVRCLKRQVDEVRKRDIVLKFSGLNDDESFDLFPYIVKVKQTYNSFPVGTCINRTDIDNEDFVDFFTKNFNWAVFGNELKWYATEAERGKVNYQDADDMLDLCIGNNINVRGHCIFWEVESTVQPWVRQLNKTDLMNAVQKRLTDLLTRYKGKFKHYDVNNEMLHGSFYQDRLGKGVRALMFNIAHKLDPSPLLFVNDYHVEDGDDPRSSPEKYIKLVLDLEAQGATVGGIGIQGHIDSPVGAIVCSALDMLSVLGRPIWFTELDVSSSNEYVRGEDLEVMLWEAFAHPSVEGIMLWGFWELSMSRENANLVEGEGEVNEAGKRFLEVKQEWLSHAYGIINDESEFTFRGYHGTYAVEICTPAGIVLKTFVVEKGDTPLVISIDLSSL.

Positions 1–22 (MEKNTNTNHTSDDNNDKNHTNE) are disordered. The segment covering 10–22 (TSDDNNDKNHTNE) has biased composition (basic and acidic residues). CBM-cenC domains lie at 26 to 163 (KIIL…EGPP) and 197 to 344 (NIVE…VQGP). A GH10 domain is found at 397–692 (FPYIVKVKQT…NEAGKRFLEV (296 aa)). E526 serves as the catalytic Proton donor. Residue E627 is the Nucleophile of the active site.

This sequence belongs to the glycosyl hydrolase 10 (cellulase F) family. Confined to immature xylems.

The enzyme catalyses Endohydrolysis of (1-&gt;4)-beta-D-xylosidic linkages in xylans.. The protein operates within glycan degradation; xylan degradation. In terms of biological role, binds to and hydrolyzes insoluble and soluble xylan substrates. The polypeptide is Endo-1,4-beta-xylanase 3 (Arabidopsis thaliana (Mouse-ear cress)).